The primary structure comprises 229 residues: Meiotically up-regulated gene 31 protein (229 aa).

Disordered regions lie at residues 16-68 (EDSA…EEDK) and 189-229 (GLPE…TTWA).

Its subcellular location is the endoplasmic reticulum. Its function is as follows. Has a role in meiosis. The chain is Meiotically up-regulated gene 31 protein (mug31) from Schizosaccharomyces pombe (strain 972 / ATCC 24843) (Fission yeast).